Consider the following 203-residue polypeptide: FMN-dependent NADH:quinone oxidoreductase 1 (203 aa).

FMN contacts are provided by residues Ser9, 15–17, 95–98, and 139–142; these read SAS, MYNF, and TAGG.

The protein belongs to the azoreductase type 1 family. Homodimer. FMN serves as cofactor.

The catalysed reaction is 2 a quinone + NADH + H(+) = 2 a 1,4-benzosemiquinone + NAD(+). The enzyme catalyses N,N-dimethyl-1,4-phenylenediamine + anthranilate + 2 NAD(+) = 2-(4-dimethylaminophenyl)diazenylbenzoate + 2 NADH + 2 H(+). Its function is as follows. Quinone reductase that provides resistance to thiol-specific stress caused by electrophilic quinones. In terms of biological role, also exhibits azoreductase activity. Catalyzes the reductive cleavage of the azo bond in aromatic azo compounds to the corresponding amines. The polypeptide is FMN-dependent NADH:quinone oxidoreductase 1 (Pseudomonas putida (strain ATCC 47054 / DSM 6125 / CFBP 8728 / NCIMB 11950 / KT2440)).